Here is a 98-residue protein sequence, read N- to C-terminus: Small ribosomal subunit protein bS20 (98 aa).

Residues 76 to 98 form a disordered region; sequence HPNNGARKKSRLASKLKPIEQTA.

The protein belongs to the bacterial ribosomal protein bS20 family.

Binds directly to 16S ribosomal RNA. This chain is Small ribosomal subunit protein bS20, found in Trichormus variabilis (strain ATCC 29413 / PCC 7937) (Anabaena variabilis).